Reading from the N-terminus, the 183-residue chain is Neuroblastoma suppressor of tumorigenicity 1 (183 aa).

The signal sequence occupies residues 1 to 19 (MVMCVRAVLVCVLLELSRA). Disulfide bonds link Cys38-Cys88, Cys52-Cys102, Cys62-Cys121, Cys66-Cys123, and Cys85-Cys126. Residues 38-127 (CEAKNITQIV…ILHCSCQSCS (90 aa)) enclose the CTCK domain. A disordered region spans residues 145-170 (AQDLPSLPDATHTHPQHAHMQADQRD).

Belongs to the DAN family.

Its subcellular location is the secreted. Its function is as follows. May act as a tumor suppressor. This is Neuroblastoma suppressor of tumorigenicity 1 (nbl1) from Danio rerio (Zebrafish).